We begin with the raw amino-acid sequence, 188 residues long: Capsid protein (188 aa).

Belongs to the tymoviruses capsid protein family.

The protein localises to the virion. Functionally, self-assembles to form a T=3 icosahedral capsid composed of 180 copies of the capsid protein. The capsid encapsulates the single-stranded RNA genome. The chain is Capsid protein from Theobroma cacao (Cacao).